The primary structure comprises 783 residues: Cyclic di-GMP phosphodiesterase NbdA (783 aa).

Positions Y81–S274 constitute an MHYT domain. The next 7 helical transmembrane spans lie at S84–V104, I120–F140, L150–M170, F176–H196, L215–P235, L255–V275, and L292–W312. The Cytoplasmic portion of the chain corresponds to S313–A783. In terms of domain architecture, GGDEF spans K375–R507. The region spanning E516–R770 is the EAL domain. 3',3'-c-di-GMP contacts are provided by Q537, E551, R555, N610, and N615. Residue E551 coordinates Mg(2+). Residue N610 participates in Mg(2+) binding. The Mg(2+) site is built by E642, D672, and D673. D672 contributes to the 3',3'-c-di-GMP binding site. R696 provides a ligand contact to 3',3'-c-di-GMP. E729 lines the Mg(2+) pocket. 2 residues coordinate 3',3'-c-di-GMP: E732 and Y751.

Requires Mg(2+) as cofactor.

Its subcellular location is the cell inner membrane. The catalysed reaction is 3',3'-c-di-GMP + H2O = 5'-phosphoguanylyl(3'-&gt;5')guanosine + H(+). Its activity is regulated as follows. PDE activity is stimulated by GTP. It could also be stimulated by NO. Functionally, displays c-di-GMP-specific phosphodiesterase (PDE) activity. Seems to play a specific role in nitric oxide (NO)-induced biofilm dispersion. Enhanced NbdA synthesis in the presence of NO increases PDE activity, leading to reduced cellular c-di-GMP levels and biofilm dispersion. Does not show diguanylate cyclase (DGC) activity. The protein is Cyclic di-GMP phosphodiesterase NbdA of Pseudomonas aeruginosa (strain ATCC 15692 / DSM 22644 / CIP 104116 / JCM 14847 / LMG 12228 / 1C / PRS 101 / PAO1).